Consider the following 491-residue polypeptide: MDLEHQTMETFLRWAAEIGISDSIDSSRFRDSCLGHSLSVSDFPDAGGRGLGAARELKKGELVLKVPRKALMTTESIIAKDLKLSDAVNLHNSLSSTQILSVCLLYEMSKEKKSFWYPYLFHIPRDYDLLATFGNFEKQALQVEDAVWATEKATAKCQSEWKEAGSLMKELELKPKFRSFQAWLWASATISSRTLHVPWDSAGCLCPVGDLFNYDAPGDYSNTPQGPESANNVEEAGLVVETHSERLTDGGFEEDVNAYCLYARRNYQLGEQVLLCYGTYTNLELLEHYGFMLEENSNDKVFIPLETSLFSLASSWPKDSLYIHQDGKLSFALISTLRLWLIPQSQRDKSVMRLVYAGSQISVKNEILVMKWMSEKCGSVLRDLPTSVTEDTVLLHNIDKLQDPELRLEQKETEAFGSEVRAFLDANCLWDVTVLSGKPIEFSRKTSRMLSKWRWSVQWRLSYKRTLADCISYCNEKMNNLLGTQDRLRDL.

The SET domain occupies 36-278 (HSLSVSDFPD…LGEQVLLCYG (243 aa)).

The protein belongs to the class V-like SAM-binding methyltransferase superfamily.

This Arabidopsis thaliana (Mouse-ear cress) protein is Protein SET DOMAIN GROUP 40 (SDG40).